Here is a 447-residue protein sequence, read N- to C-terminus: Protein odr-4 homolog (447 aa).

Helical transmembrane passes span Met-82–Asp-102 and Ile-425–Phe-445.

Belongs to the ODR-4 family. Ubiquitously expressed.

It localises to the membrane. Its function is as follows. May play a role in the trafficking of a subset of G-protein coupled receptors. The protein is Protein odr-4 homolog (Odr4) of Mus musculus (Mouse).